Here is a 300-residue protein sequence, read N- to C-terminus: MTLPEDTTTAESLIHTSVLSAEVLEALAPTPGKTIVDGTLGGAGHTRLLLEAGAHVYGIDQDPFALDRAREAGLPNLTVLQGNYRDMVSLLEQAGVSQVDGILLDIGVSSFQLDDAGRGFSYHTEAPLDMRMSQSGESAADVVNTYEEEDLAAIIYEYGEDRLSRRIARAIGQARQKAPIETTVQLAEIVKRAYPGFSKGIHPARRTFQALRIHVNDELGALRDGLQAAETLLRPGGRLAVISFHSLEDRIVKRFLLGSEVLQPLTKRPVVASDEEQAINPRSRSAKLRAAERVVVQEAS.

S-adenosyl-L-methionine-binding positions include 43-45, aspartate 60, aspartate 105, and glutamine 112; that span reads AGH.

Belongs to the methyltransferase superfamily. RsmH family.

The protein localises to the cytoplasm. The catalysed reaction is cytidine(1402) in 16S rRNA + S-adenosyl-L-methionine = N(4)-methylcytidine(1402) in 16S rRNA + S-adenosyl-L-homocysteine + H(+). Its function is as follows. Specifically methylates the N4 position of cytidine in position 1402 (C1402) of 16S rRNA. In Deinococcus deserti (strain DSM 17065 / CIP 109153 / LMG 22923 / VCD115), this protein is Ribosomal RNA small subunit methyltransferase H.